We begin with the raw amino-acid sequence, 399 residues long: Subtilisin-like protease 1 (399 aa).

Positions 1–19 are cleaved as a signal peptide; the sequence is MGVFRFISISLAAVSAANA. The propeptide occupies 20–116; that stretch reads AQILSMPHAQ…VEPDTIISVH (97 aa). In terms of domain architecture, Inhibitor I9 spans 34–115; the sequence is SYIVMMKDDT…FVEPDTIISV (82 aa). Residues 126–399 enclose the Peptidase S8 domain; sequence SWGLARISNP…TNVLINNGGA (274 aa). Catalysis depends on charge relay system residues Asp-158 and His-190. A disordered region spans residues 175–198; the sequence is GSNQVNDGDDRDGSGHGTHTSGTM. An N-linked (GlcNAc...) asparagine glycan is attached at Asn-251. A compositionally biased stretch (polar residues) spans 282–294; the sequence is NDNQDAQSSSPAS. The interval 282-312 is disordered; sequence NDNQDAQSSSPASEPSVCTVGSSAEDDSRSS. Residue Ser-345 is the Charge relay system of the active site.

It belongs to the peptidase S8 family.

The protein localises to the secreted. Secreted subtilisin-like serine protease with keratinolytic activity that contributes to pathogenicity. This Arthroderma benhamiae (Trichophyton mentagrophytes) protein is Subtilisin-like protease 1 (SUB1).